Reading from the N-terminus, the 215-residue chain is ER lumen protein-retaining receptor 3 (215 aa).

Over 1–4 (MNIF) the chain is Lumenal. The helical transmembrane segment at 5 to 24 (RLSGDVCHLIAIIILFLKIW) threads the bilayer. Residues 25-32 (RSKSCAGI) lie on the Cytoplasmic side of the membrane. The chain crosses the membrane as a helical span at residues 33–52 (SGKSQVLFALVFTTRYLDLF). The interaction with the K-D-E-L motif on target proteins stretch occupies residues 47–48 (RY). Over 53–58 (TSYISA) the chain is Lumenal. The helical transmembrane segment at 59-79 (YNTVMKVVYLLLAYSTVGLIF) threads the bilayer. The Cytoplasmic portion of the chain corresponds to 80 to 92 (FRFRNSYDSESDS). A helical membrane pass occupies residues 93–110 (FRVEFLLVPVAGLSFLEN). Topologically, residues 111 to 116 (YAFTPL) are lumenal. Residues 117–135 (EILWTFSIYLESVAILPQL) form a helical membrane-spanning segment. The Cytoplasmic segment spans residues 136-149 (FMITKTGEAESITA). The chain crosses the membrane as a helical span at residues 150 to 168 (HYLLFLGLYRALYLANWLW). An interaction with the K-D-E-L motif on target proteins region spans residues 159–169 (RALYLANWLWR). Residues 169–178 (RFHTEGFYDQ) lie on the Lumenal side of the membrane. A helical transmembrane segment spans residues 179–199 (IAVVSGVVQTIFYCDFFYLYF). Residues 200 to 215 (TRVLRGSGKMSLPMPV) are Cytoplasmic-facing. The interval 204-208 (RGSGK) is important for recycling of cargo proteins with the sequence motif K-D-E-L from the Golgi to the endoplasmic reticulum.

This sequence belongs to the ERD2 family.

Its subcellular location is the endoplasmic reticulum membrane. It is found in the golgi apparatus membrane. It localises to the cytoplasmic vesicle. The protein localises to the COPI-coated vesicle membrane. Its function is as follows. Receptor for the C-terminal sequence motif K-D-E-L that is present on endoplasmic reticulum resident proteins and that mediates their recycling from the Golgi back to the endoplasmic reticulum. The sequence is that of ER lumen protein-retaining receptor 3 (kdelr3) from Danio rerio (Zebrafish).